The chain runs to 261 residues: Syntaxin-7 (261 aa).

Serine 2 bears the N-acetylserine mark. Over 2–238 (SYTPGIGGDP…NYQRKSRKTL (237 aa)) the chain is Cytoplasmic. The residue at position 4 (threonine 4) is a Phosphothreonine. A coiled-coil region spans residues 47 to 68 (ELRQQLQQEQQYTNQLAKETDK). A Phosphothreonine modification is found at threonine 79. Serine 125, serine 126, serine 129, and serine 205 each carry phosphoserine. The segment at 128–148 (VSGGFPEDSSKEKNFVSWESQ) is disordered. The t-SNARE coiled-coil homology domain occupies 165-227 (LRLIHERESS…QQANQQLSRA (63 aa)). The chain crosses the membrane as a helical; Anchor for type IV membrane protein span at residues 239–259 (CIIILILVVGIVIIFFIVWGL). The Vesicular segment spans residues 260-261 (KG).

The protein belongs to the syntaxin family. As to quaternary structure, interacts with VPS11, VPS16 and VPS18. Interacts with VPS33A. Forms a SNARE complex with VTI1B, STX8 and VAMP8 which functions in the homotypic fusion of late endosomes. Component of the SNARE complex composed of STX7, STX8, VAMP7 and VTI1B that is required for heterotypic fusion of late endosomes with lysosomes. Interacts with TPC1. Detected in all tissues tested. Highest expression is found in kidney followed by lung, spleen, heart and brain. Lower expression, in skeletal muscle, liver and testis.

The protein localises to the early endosome membrane. Its function is as follows. May be involved in protein trafficking from the plasma membrane to the early endosome (EE) as well as in homotypic fusion of endocytic organelles. Mediates the endocytic trafficking from early endosomes to late endosomes and lysosomes. This is Syntaxin-7 (Stx7) from Rattus norvegicus (Rat).